The primary structure comprises 507 residues: Alkyl hydroperoxide reductase subunit F (507 aa).

207–222 is an FAD binding site; that stretch reads DVLIVGGGPASGSAAI. C335 and C338 form a disulfide bridge. 347–361 contacts NAD(+); sequence DVAVIGGGNSGVEAA. An FAD-binding site is contributed by 467-477; that stretch reads TNVPGIFAAGD.

It belongs to the class-II pyridine nucleotide-disulfide oxidoreductase family. Homodimer. It depends on FAD as a cofactor.

Functionally, serves to protect the cell against DNA damage by alkyl hydroperoxides. It can use either NADH or NADPH as electron donor for direct reduction of redox dyes or of alkyl hydroperoxides when combined with the AhpC protein. The chain is Alkyl hydroperoxide reductase subunit F (ahpF) from Staphylococcus aureus (strain MRSA252).